Here is a 373-residue protein sequence, read N- to C-terminus: 3 beta-hydroxysteroid dehydrogenase/Delta 5--&gt;4-isomerase type 6 (373 aa).

The active-site Proton acceptor is Y155. NAD(+) is bound at residue K159. A helical transmembrane segment spans residues V288–I308.

Belongs to the 3-beta-HSD family. As to expression, expressed in skin and testis.

It is found in the endoplasmic reticulum membrane. The protein resides in the mitochondrion membrane. The catalysed reaction is a 3beta-hydroxy-Delta(5)-steroid + NAD(+) = a 3-oxo-Delta(5)-steroid + NADH + H(+). The enzyme catalyses a 3-oxo-Delta(5)-steroid = a 3-oxo-Delta(4)-steroid. Its pathway is lipid metabolism; steroid biosynthesis. In terms of biological role, 3-beta-HSD is a bifunctional enzyme, that catalyzes the oxidative conversion of Delta(5)-ene-3-beta-hydroxy steroid, and the oxidative conversion of ketosteroids. The 3-beta-HSD enzymatic system plays a crucial role in the biosynthesis of all classes of hormonal steroids. May be involved in local production of progesterone. In Mus musculus (Mouse), this protein is 3 beta-hydroxysteroid dehydrogenase/Delta 5--&gt;4-isomerase type 6 (Hsd3b6).